Here is a 414-residue protein sequence, read N- to C-terminus: MSRKIQGGSVVEMQGDEMTRIIWELIKEKLILPYVELDLHSYDLGIENRDATNDQVTKDAAEAIKKYNVGVKCATITPDEKRVEEFKLKQMWKSPNGTIRNILGGTVFREAIICKNIPRLVTGWVKPIIIGRHAYGDQYRATDFVVPGPGKVEITYTPKDGTQKVTYMVHDFEEGGGVAMGMYNQDKSIEDFAHSSFQMALSKGWPLYLSTKNTILKKYDGRFKDIFQEIYDKKYKSQFEAQKICYEHRLIDDMVAQAMKSEGGFIWACKNYDGDVQSDSVAQGYGSLGMMTSVLICPDGKTVEAEAAHGTVTRHYRMYQKGQETSTNPIASIFAWSRGLAHRAKLDNNTELSFFAKALEDVCIETIEAGFMTKDLAACIKGLPNVQRSDYLNTFEFMDKLGENLKAKLAQAKL.

Ser-2 carries the post-translational modification N-acetylserine. Tyr-42 bears the Phosphotyrosine mark. NADP(+) is bound at residue 75–77 (TIT). Thr-77 is a substrate binding site. The residue at position 81 (Lys-81) is an N6-acetyllysine. NADP(+) is bound at residue Arg-82. Residues 94-100 (SPNGTIR) and Arg-109 each bind substrate. Lys-126 carries the N6-succinyllysine modification. Substrate is bound by residues Arg-132 and Lys-212. N6-acetyllysine is present on residues Lys-224, Lys-233, and Lys-243. Mn(2+) is bound at residue Asp-252. Lys-260 is a binding site for NADP(+). Mn(2+) is bound by residues Asp-275 and Asp-279. An NADP(+)-binding site is contributed by 310–315 (GTVTRH). Lys-321 carries the post-translational modification N6-acetyllysine. Asn-328 contributes to the NADP(+) binding site. Ser-389 carries the post-translational modification Phosphoserine. Lys-400 carries the N6-succinyllysine modification.

Belongs to the isocitrate and isopropylmalate dehydrogenases family. In terms of assembly, homodimer. Mg(2+) serves as cofactor. Mn(2+) is required as a cofactor. Acetylation at Lys-374 dramatically reduces catalytic activity. As to expression, highly expressed in the liver followed by kidney, lower expression in spleen, brain and lung.

It localises to the cytoplasm. It is found in the cytosol. It catalyses the reaction D-threo-isocitrate + NADP(+) = 2-oxoglutarate + CO2 + NADPH. With respect to regulation, irreversibly inhibited by Cd(2+) concentrations above 50 uM. Functionally, catalyzes the NADP(+)-dependent oxidative decarboxylation of isocitrate (D-threo-isocitrate) to 2-ketoglutarate (2-oxoglutarate), which is required by other enzymes such as the phytanoyl-CoA dioxygenase. Plays a critical role in the generation of NADPH, an important cofactor in many biosynthesis pathways. May act as a corneal epithelial crystallin and may be involved in maintaining corneal epithelial transparency. In Mus musculus (Mouse), this protein is Isocitrate dehydrogenase [NADP] cytoplasmic (Idh1).